The sequence spans 275 residues: Exosome complex component Rrp42 (275 aa).

The protein belongs to the RNase PH family. Rrp42 subfamily. In terms of assembly, component of the archaeal exosome complex. Forms a hexameric ring-like arrangement composed of 3 Rrp41-Rrp42 heterodimers. The hexameric ring associates with a trimer of Rrp4 and/or Csl4 subunits.

It localises to the cytoplasm. Non-catalytic component of the exosome, which is a complex involved in RNA degradation. Contributes to the structuring of the Rrp41 active site. The chain is Exosome complex component Rrp42 from Saccharolobus islandicus (strain L.S.2.15 / Lassen #1) (Sulfolobus islandicus).